Consider the following 423-residue polypeptide: Polyglutamylase complex subunit TTLL1 (423 aa).

A TTL domain is found at 1-367 (MAGKVKWVTD…NGEIPDCKWN (367 aa)). Residues Lys-138, 144–145 (QG), 181–184 (SLYI), and 194–196 (KFD) each bind ATP. Gln-144 contributes to the a protein binding site. Residue Arg-220 participates in L-glutamate binding. 241-242 (TN) is an ATP binding site. An L-glutamate-binding site is contributed by Lys-259. 3 residues coordinate Mg(2+): Asp-313, Glu-326, and Asn-328. Lys-344 is a binding site for L-glutamate. Positions 391–423 (GADRELRSRQGQSLGPRAGRSRDSGRAVLTTWK) are disordered.

This sequence belongs to the tubulin polyglutamylase family. As to quaternary structure, part of the neuronal tubulin polyglutamylase complex which contains TPGS1, TPGS2, TTLL1, LRRC49 and NICN1. Interacts with PCM1, CSTPP1 and LRRC49. It depends on Mg(2+) as a cofactor. Expressed in a wide range of tissues. Has a stronger expression in heart, brain and testis.

The protein localises to the cytoplasm. It is found in the cytoskeleton. Its subcellular location is the cilium basal body. The protein resides in the cilium axoneme. It localises to the cell projection. The protein localises to the cilium. It is found in the flagellum. The catalysed reaction is (L-glutamyl)(n)-gamma-L-glutamyl-L-glutamyl-[protein] + L-glutamate + ATP = (L-glutamyl)(n+1)-gamma-L-glutamyl-L-glutamyl-[protein] + ADP + phosphate + H(+). In terms of biological role, catalytic subunit of a polyglutamylase complex which modifies tubulin, generating side chains of glutamate on the gamma-carboxyl group of specific glutamate residues within the C-terminal tail of tubulin. Probably involved in the side-chain elongation step of the polyglutamylation reaction rather than the initiation step. Modifies both alpha- and beta-tubulins with a preference for the alpha-tail. Unlike most polyglutamylases of the tubulin--tyrosine ligase family, only displays a catalytic activity when in complex with other proteins as it is most likely lacking domains important for autonomous activity. Part of the neuronal tubulin polyglutamylase complex. Mediates cilia and flagella polyglutamylation which is essential for their biogenesis and motility. Involved in respiratory motile cilia function through the regulation of beating asymmetry. Essential for sperm flagella biogenesis, motility and male fertility. Involved in KLF4 glutamylation which impedes its ubiquitination, thereby leading to somatic cell reprogramming, pluripotency maintenance and embryogenesis. The polypeptide is Polyglutamylase complex subunit TTLL1 (Homo sapiens (Human)).